Consider the following 71-residue polypeptide: Translational regulator CsrA (71 aa).

The protein belongs to the CsrA/RsmA family. In terms of assembly, homodimer; the beta-strands of each monomer intercalate to form a hydrophobic core, while the alpha-helices form wings that extend away from the core.

The protein resides in the cytoplasm. In terms of biological role, a translational regulator that binds mRNA to regulate translation initiation and/or mRNA stability. Usually binds in the 5'-UTR at or near the Shine-Dalgarno sequence preventing ribosome-binding, thus repressing translation. Its main target seems to be the major flagellin gene, while its function is anatagonized by FliW. In Clostridium botulinum (strain Alaska E43 / Type E3), this protein is Translational regulator CsrA.